The chain runs to 227 residues: MGQKVNPVGIRLGIVKDHNSVWYADKKNYSDHLLTDIKVREFLMKKLEKASVSKVIIERPPQNAKITIHTARPGIVIGKKGEDVDRLRQEVGELMKVPVHINIEEIRKPDLDAKLVASGVAGQLERRVMFRRAMKRAVQNAMRQGAKGIKIQVGGRLGGAEIARTEWYREGRVPLHTLRADIDYATHEAHTTYGVIGVKVWIFKGEILGGIEQVRAEKKAAKKKSSK.

Residues 39–107 (VREFLMKKLE…PVHINIEEIR (69 aa)) form the KH type-2 domain.

Belongs to the universal ribosomal protein uS3 family. In terms of assembly, part of the 30S ribosomal subunit. Forms a tight complex with proteins S10 and S14.

Its function is as follows. Binds the lower part of the 30S subunit head. Binds mRNA in the 70S ribosome, positioning it for translation. The protein is Small ribosomal subunit protein uS3 of Hahella chejuensis (strain KCTC 2396).